Consider the following 581-residue polypeptide: Potassium-transporting ATPase potassium-binding subunit (581 aa).

Transmembrane regions (helical) follow at residues 2-22 (LQGWIQIALTILIIVAITPFF), 74-94 (AVIAILVFSLIAGQGVLPLNP), 135-155 (GLGYQMFTSAGTGLAVGIAFI), 177-197 (ILLPISIVGAIALIIAGVPET), 255-275 (LVQLVAILSIPTSLIYTYGVF), 284-304 (LIYLIPLGIFIGFTIITAIGE), 332-352 (WAQSALYAVTTTATMCGAVIA), 357-377 (LMPNGGFATLSNLFLQIVFGG), 381-401 (GTAYLFAYLILAVFVTGLMVG), 421-441 (FLILLVHPIAILIPGAIALAF), 501-521 (LSACFSLLAGRYIPIAALLLL), and 550-570 (AGVILILGALTFLPILALGPI).

This sequence belongs to the KdpA family. In terms of assembly, the system is composed of three essential subunits: KdpA, KdpB and KdpC.

Its subcellular location is the cell inner membrane. Part of the high-affinity ATP-driven potassium transport (or Kdp) system, which catalyzes the hydrolysis of ATP coupled with the electrogenic transport of potassium into the cytoplasm. This subunit binds the periplasmic potassium ions and delivers the ions to the membrane domain of KdpB through an intramembrane tunnel. The protein is Potassium-transporting ATPase potassium-binding subunit of Microcystis aeruginosa (strain NIES-843 / IAM M-2473).